We begin with the raw amino-acid sequence, 113 residues long: Hydrogenase maturation factor HypA (113 aa).

H2 serves as a coordination point for Ni(2+). C73, C76, C89, and C92 together coordinate Zn(2+).

This sequence belongs to the HypA/HybF family.

In terms of biological role, involved in the maturation of [NiFe] hydrogenases. Required for nickel insertion into the metal center of the hydrogenase. This is Hydrogenase maturation factor HypA from Cereibacter sphaeroides (Rhodobacter sphaeroides).